The sequence spans 100 residues: NADH-quinone oxidoreductase subunit K (100 aa).

The next 3 helical transmembrane spans lie at 4 to 24, 28 to 48, and 60 to 80; these read LQHG…GLLI, LLFM…AFVV, and VMYI…LALL.

Belongs to the complex I subunit 4L family. As to quaternary structure, NDH-1 is composed of 13 different subunits. Subunits NuoA, H, J, K, L, M, N constitute the membrane sector of the complex.

The protein localises to the cell inner membrane. It catalyses the reaction a quinone + NADH + 5 H(+)(in) = a quinol + NAD(+) + 4 H(+)(out). Its function is as follows. NDH-1 shuttles electrons from NADH, via FMN and iron-sulfur (Fe-S) centers, to quinones in the respiratory chain. The immediate electron acceptor for the enzyme in this species is believed to be ubiquinone. Couples the redox reaction to proton translocation (for every two electrons transferred, four hydrogen ions are translocated across the cytoplasmic membrane), and thus conserves the redox energy in a proton gradient. In Edwardsiella ictaluri (strain 93-146), this protein is NADH-quinone oxidoreductase subunit K.